Reading from the N-terminus, the 226-residue chain is ATP-dependent dethiobiotin synthetase BioD (226 aa).

13-18 provides a ligand contact to ATP; it reads DVGKTV. Threonine 17 is a Mg(2+) binding site. Lysine 38 is a catalytic residue. ATP is bound by residues aspartate 55, 116–119, and 176–177; these read EGAG and NR. Residues aspartate 55 and glutamate 116 each coordinate Mg(2+).

Belongs to the dethiobiotin synthetase family. As to quaternary structure, homodimer. Requires Mg(2+) as cofactor.

It localises to the cytoplasm. The enzyme catalyses (7R,8S)-7,8-diammoniononanoate + CO2 + ATP = (4R,5S)-dethiobiotin + ADP + phosphate + 3 H(+). Its pathway is cofactor biosynthesis; biotin biosynthesis; biotin from 7,8-diaminononanoate: step 1/2. Catalyzes a mechanistically unusual reaction, the ATP-dependent insertion of CO2 between the N7 and N8 nitrogen atoms of 7,8-diaminopelargonic acid (DAPA, also called 7,8-diammoniononanoate) to form a ureido ring. The chain is ATP-dependent dethiobiotin synthetase BioD from Aliivibrio fischeri (strain MJ11) (Vibrio fischeri).